A 603-amino-acid polypeptide reads, in one-letter code: Elongation factor 4 (603 aa).

One can recognise a tr-type G domain in the interval 2 to 184 (NHIRNFSIIA…AVVALIPAPK (183 aa)). GTP-binding positions include 14-19 (DHGKST) and 131-134 (NKMD).

This sequence belongs to the TRAFAC class translation factor GTPase superfamily. Classic translation factor GTPase family. LepA subfamily.

Its subcellular location is the cell inner membrane. The enzyme catalyses GTP + H2O = GDP + phosphate + H(+). Required for accurate and efficient protein synthesis under certain stress conditions. May act as a fidelity factor of the translation reaction, by catalyzing a one-codon backward translocation of tRNAs on improperly translocated ribosomes. Back-translocation proceeds from a post-translocation (POST) complex to a pre-translocation (PRE) complex, thus giving elongation factor G a second chance to translocate the tRNAs correctly. Binds to ribosomes in a GTP-dependent manner. The polypeptide is Elongation factor 4 (Polaromonas naphthalenivorans (strain CJ2)).